Here is a 407-residue protein sequence, read N- to C-terminus: Putative cystathionine beta-lyase (407 aa).

Position 237 is an N6-(pyridoxal phosphate)lysine (K237).

Belongs to the class-II pyridoxal-phosphate-dependent aminotransferase family. MalY/PatB cystathionine beta-lyase subfamily. Pyridoxal 5'-phosphate serves as cofactor.

It catalyses the reaction L,L-cystathionine + H2O = L-homocysteine + pyruvate + NH4(+). The enzyme catalyses an S-substituted L-cysteine + H2O = a thiol + pyruvate + NH4(+). Its pathway is amino-acid biosynthesis; L-methionine biosynthesis via de novo pathway; L-homocysteine from L-cystathionine: step 1/1. The polypeptide is Putative cystathionine beta-lyase (Mycobacterium tuberculosis (strain CDC 1551 / Oshkosh)).